A 430-amino-acid chain; its full sequence is Glutamate-1-semialdehyde 2,1-aminomutase (430 aa).

N6-(pyridoxal phosphate)lysine is present on Lys-268.

It belongs to the class-III pyridoxal-phosphate-dependent aminotransferase family. HemL subfamily. In terms of assembly, homodimer. The cofactor is pyridoxal 5'-phosphate.

The protein resides in the cytoplasm. It carries out the reaction (S)-4-amino-5-oxopentanoate = 5-aminolevulinate. It participates in porphyrin-containing compound metabolism; protoporphyrin-IX biosynthesis; 5-aminolevulinate from L-glutamyl-tRNA(Glu): step 2/2. This chain is Glutamate-1-semialdehyde 2,1-aminomutase (hemL), found in Bacillus subtilis (strain 168).